Consider the following 487-residue polypeptide: MGRLLAKMLFPLAMCLFVSAVSASDSPSSNEANPIVISSEAMDYDTNTITVREGKKLMVSCVFESDEQIHKSDLLWKQANGNNIDGESNPSLFSVILNEKGSKHRKTSLHFSSVHTRDTGLYTCTGRTAGGENFEKTIKLVVLPAIEWNDKDTVKGALLGEPITIDCGVKGPSGKEPMIQMTNGNGEPLDEEIWTIAGNEATIDSLKKEHAELTVSCITIEMHQETSKEEFPVVDRKDVNIEVYTLPEFETEESVQYTVIDNHVRDAIIYCNVTHSFPPVRHYTFYHGDEEIKMSDKFNIFVNVGVSQGAHLKIHNVNENDLGTYKCEANNIKAKSYHTIHLREANAPAEPKVTLIEDKRHSIIWKVESIDRDPDLPMTAVEIRHLRAGTAEASGVSDEDISDAYWKSHSIFMQRNIKDDGIYEINGLRHGHEYVWRFRQINEAGFGDSVVLRAKTLDDHDLEMMDSASDSKFPLALATLFFVCLFI.

The N-terminal stretch at 1–23 (MGRLLAKMLFPLAMCLFVSAVSA) is a signal peptide. Ig-like domains are found at residues 34–139 (PIVI…KTIK) and 247–354 (PEFE…PKVT). 2 disulfide bridges follow: cysteine 61–cysteine 124 and cysteine 271–cysteine 327. The GPI-anchor amidated aspartate moiety is linked to residue aspartate 466. The propeptide at 467–487 (SASDSKFPLALATLFFVCLFI) is removed in mature form.

Expressed in the cholinergic motor neurons AS, VA and DA in the ventral nerve cord and in the mechanosensory ALM neurons in the midbody.

It is found in the cell projection. The protein localises to the axon. The protein resides in the synapse. It localises to the cell membrane. Its function is as follows. Cell surface protein which plays a role in the plasticity of cholinergic synapses at neuromuscular junctions and in the polarity of the mechanosensory neuron ALM, possibly by antagonizing Wnt signaling. The protein is Neuronal immunoglobulin domain-containing protein rig-3 of Caenorhabditis elegans.